The sequence spans 382 residues: DnaJ homolog dnj-20 (382 aa).

Residues 1-21 (MRILNVSLLVLTAFLVDFVEC) form the signal peptide. In terms of domain architecture, J spans 24–89 (DFYKILGVSK…EKRAMYDRHG (66 aa)).

The chain is DnaJ homolog dnj-20 from Caenorhabditis briggsae.